The following is a 94-amino-acid chain: RNA-binding protein Hfq (94 aa).

A Sm domain is found at 9–68; it reads DPFLNALRRERVPVSIYLVNGIKLQGQVESFDQFVILLKNTVSQMVYKHAISTVVPARPF. The tract at residues 70 to 94 is disordered; sequence VSAHHSSPAPTPAGGFNGQNDETSE.

It belongs to the Hfq family. As to quaternary structure, homohexamer.

Its function is as follows. RNA chaperone that binds small regulatory RNA (sRNAs) and mRNAs to facilitate mRNA translational regulation in response to envelope stress, environmental stress and changes in metabolite concentrations. Also binds with high specificity to tRNAs. The polypeptide is RNA-binding protein Hfq (Shewanella woodyi (strain ATCC 51908 / MS32)).